The primary structure comprises 80 residues: Phosphoribosylformylglycinamidine synthase subunit PurS (80 aa).

This sequence belongs to the PurS family. Homodimer. Part of the FGAM synthase complex composed of 1 PurL, 1 PurQ and 2 PurS subunits.

It is found in the cytoplasm. It catalyses the reaction N(2)-formyl-N(1)-(5-phospho-beta-D-ribosyl)glycinamide + L-glutamine + ATP + H2O = 2-formamido-N(1)-(5-O-phospho-beta-D-ribosyl)acetamidine + L-glutamate + ADP + phosphate + H(+). Its pathway is purine metabolism; IMP biosynthesis via de novo pathway; 5-amino-1-(5-phospho-D-ribosyl)imidazole from N(2)-formyl-N(1)-(5-phospho-D-ribosyl)glycinamide: step 1/2. In terms of biological role, part of the phosphoribosylformylglycinamidine synthase complex involved in the purines biosynthetic pathway. Catalyzes the ATP-dependent conversion of formylglycinamide ribonucleotide (FGAR) and glutamine to yield formylglycinamidine ribonucleotide (FGAM) and glutamate. The FGAM synthase complex is composed of three subunits. PurQ produces an ammonia molecule by converting glutamine to glutamate. PurL transfers the ammonia molecule to FGAR to form FGAM in an ATP-dependent manner. PurS interacts with PurQ and PurL and is thought to assist in the transfer of the ammonia molecule from PurQ to PurL. The protein is Phosphoribosylformylglycinamidine synthase subunit PurS of Archaeoglobus fulgidus (strain ATCC 49558 / DSM 4304 / JCM 9628 / NBRC 100126 / VC-16).